The primary structure comprises 230 residues: Lactate utilization protein C (230 aa).

Belongs to the LutC/YkgG family.

Functionally, is involved in L-lactate degradation and allows cells to grow with lactate as the sole carbon source. This chain is Lactate utilization protein C, found in Halalkalibacterium halodurans (strain ATCC BAA-125 / DSM 18197 / FERM 7344 / JCM 9153 / C-125) (Bacillus halodurans).